A 629-amino-acid polypeptide reads, in one-letter code: tRNA uridine 5-carboxymethylaminomethyl modification enzyme MnmG (629 aa).

Residues 13-18, V125, and S180 contribute to the FAD site; that span reads GGGHAG. 273 to 287 serves as a coordination point for NAD(+); the sequence is GPRYCPSIEDKVMRF. Q370 serves as a coordination point for FAD.

This sequence belongs to the MnmG family. Homodimer. Heterotetramer of two MnmE and two MnmG subunits. The cofactor is FAD.

Its subcellular location is the cytoplasm. In terms of biological role, NAD-binding protein involved in the addition of a carboxymethylaminomethyl (cmnm) group at the wobble position (U34) of certain tRNAs, forming tRNA-cmnm(5)s(2)U34. The polypeptide is tRNA uridine 5-carboxymethylaminomethyl modification enzyme MnmG (Enterobacter sp. (strain 638)).